Reading from the N-terminus, the 376-residue chain is Succinyl-diaminopimelate desuccinylase (376 aa).

Position 67 (histidine 67) interacts with Zn(2+). The active site involves aspartate 69. Aspartate 100 contacts Zn(2+). Catalysis depends on glutamate 134, which acts as the Proton acceptor. Residues glutamate 135, glutamate 163, and histidine 349 each coordinate Zn(2+).

This sequence belongs to the peptidase M20A family. DapE subfamily. Homodimer. Zn(2+) serves as cofactor. Requires Co(2+) as cofactor.

The catalysed reaction is N-succinyl-(2S,6S)-2,6-diaminopimelate + H2O = (2S,6S)-2,6-diaminopimelate + succinate. It participates in amino-acid biosynthesis; L-lysine biosynthesis via DAP pathway; LL-2,6-diaminopimelate from (S)-tetrahydrodipicolinate (succinylase route): step 3/3. Its function is as follows. Catalyzes the hydrolysis of N-succinyl-L,L-diaminopimelic acid (SDAP), forming succinate and LL-2,6-diaminopimelate (DAP), an intermediate involved in the bacterial biosynthesis of lysine and meso-diaminopimelic acid, an essential component of bacterial cell walls. The polypeptide is Succinyl-diaminopimelate desuccinylase (Xanthomonas campestris pv. campestris (strain 8004)).